Here is a 346-residue protein sequence, read N- to C-terminus: Acetyl-coenzyme A carboxylase carboxyl transferase subunit beta (346 aa).

One can recognise a CoA carboxyltransferase N-terminal domain in the interval L24–A292. The segment covering A300–E311 has biased composition (acidic residues). The segment at A300–E346 is disordered. Positions A330–A340 are enriched in basic residues.

The protein belongs to the AccD/PCCB family. In terms of assembly, acetyl-CoA carboxylase is a heterohexamer composed of biotin carboxyl carrier protein (AccB), biotin carboxylase (AccC) and two subunits each of ACCase subunit alpha (AccA) and ACCase subunit beta (AccD).

The protein localises to the cytoplasm. The enzyme catalyses N(6)-carboxybiotinyl-L-lysyl-[protein] + acetyl-CoA = N(6)-biotinyl-L-lysyl-[protein] + malonyl-CoA. The protein operates within lipid metabolism; malonyl-CoA biosynthesis; malonyl-CoA from acetyl-CoA: step 1/1. Component of the acetyl coenzyme A carboxylase (ACC) complex. Biotin carboxylase (BC) catalyzes the carboxylation of biotin on its carrier protein (BCCP) and then the CO(2) group is transferred by the transcarboxylase to acetyl-CoA to form malonyl-CoA. This is Acetyl-coenzyme A carboxylase carboxyl transferase subunit beta from Hirschia baltica (strain ATCC 49814 / DSM 5838 / IFAM 1418).